The chain runs to 36 residues: Photosystem I reaction center subunit VIII (36 aa).

Residues 9-29 (ILVPLVGLIFPAFSMALFFLY) form a helical membrane-spanning segment.

Belongs to the PsaI family.

The protein localises to the plastid. It is found in the chloroplast thylakoid membrane. Functionally, may help in the organization of the PsaL subunit. This Thalassiosira pseudonana (Marine diatom) protein is Photosystem I reaction center subunit VIII.